Reading from the N-terminus, the 426-residue chain is Zinc finger CCCH domain-containing protein 15 (426 aa).

Low complexity predominate over residues 1–12 (MPPKKQAQAGGS). 2 disordered regions span residues 1–30 (MPPK…KTFG) and 53–74 (GQQN…KDDK). A compositionally biased stretch (basic and acidic residues) spans 13–29 (KKAEQKKKEKIIEDKTF). Polar residues predominate over residues 53–62 (GQQNPRQVAQ). A coiled-coil region spans residues 61–86 (AQSEAEKKLKKDDKKKELQELNELFK). Basic and acidic residues predominate over residues 64-74 (EAEKKLKKDDK). C3H1-type zinc fingers lie at residues 99-126 (DPKS…HDLT) and 174-212 (PKTQ…HALP). The stretch at 218–285 (KKDKKKEEKE…RRKADFKAGK (68 aa)) forms a coiled coil. At Ser231 the chain carries Phosphoserine. The tract at residues 236 to 260 (IERERSALGPNVTKITLESFLAWKK) is required for interaction with DRG1. Residues 299–326 (PELVNDDDEEADDTRYTQGTGGDEVDDS) form a disordered region. Phosphoserine is present on residues Ser351, Ser360, and Ser381. Positions 358-411 (YTSDKDENKLSEASGGRAENGERSDLEEDNEREGTENGAIDAVPVDENLFTGED) are disordered.

This sequence belongs to the ZC3H15/TMA46 family. As to quaternary structure, interacts with DRG1; this interaction prevents DRG1 poly-ubiquitination and degradation by proteasome. DRG1-ZC3H15/DFRP1 complex co-sediments with polysomes. Associates with microtubules.

The protein localises to the cytoplasm. It localises to the nucleus. Functionally, protects DRG1 from proteolytic degradation. Stimulates DRG1 GTPase activity likely by increasing the affinity for the potassium ions. This Homo sapiens (Human) protein is Zinc finger CCCH domain-containing protein 15 (ZC3H15).